Reading from the N-terminus, the 834-residue chain is RNA-binding protein 12B-B (834 aa).

Residues 154-229 (PYLFLRGLPY…RFIEVMQGSE (76 aa)) enclose the RRM 1 domain. Positions 237–277 (GTATEGGDTPRMRSEEHSPSRRINGRHFRKRSHSKSPRARS) are disordered. Residues 244-255 (DTPRMRSEEHSP) show a composition bias toward basic and acidic residues. Residues 259–277 (INGRHFRKRSHSKSPRARS) show a composition bias toward basic residues. 2 consecutive RRM domains span residues 283–359 (FYVH…PVSR) and 401–478 (LCIY…LISE). Disordered stretches follow at residues 546–572 (GYFR…PWEE) and 621–643 (HFRR…RSRE). The span at 550 to 572 (QSDRCSPEDFRHSPEDYRHPWEE) shows a compositional bias: basic and acidic residues. Ser-701 is modified (phosphoserine). Residues 758–834 (IRVMISNLPF…GPRKVKLSLL (77 aa)) form the RRM 4 domain.

The protein is RNA-binding protein 12B-B (Rbm12b2) of Mus musculus (Mouse).